The sequence spans 133 residues: Small ribosomal subunit protein uS8 (133 aa).

It belongs to the universal ribosomal protein uS8 family. In terms of assembly, part of the 30S ribosomal subunit. Contacts proteins S5 and S12.

One of the primary rRNA binding proteins, it binds directly to 16S rRNA central domain where it helps coordinate assembly of the platform of the 30S subunit. The sequence is that of Small ribosomal subunit protein uS8 from Prochlorococcus marinus (strain MIT 9215).